The primary structure comprises 701 residues: Elongation factor G (701 aa).

Positions 11–287 constitute a tr-type G domain; it reads TKVRNIGIMA…AVIDYLPSPL (277 aa). Residues 20-27, 84-88, and 138-141 each bind GTP; these read AHIDAGKT, DTPGH, and NKMD.

Belongs to the TRAFAC class translation factor GTPase superfamily. Classic translation factor GTPase family. EF-G/EF-2 subfamily.

The protein resides in the cytoplasm. Catalyzes the GTP-dependent ribosomal translocation step during translation elongation. During this step, the ribosome changes from the pre-translocational (PRE) to the post-translocational (POST) state as the newly formed A-site-bound peptidyl-tRNA and P-site-bound deacylated tRNA move to the P and E sites, respectively. Catalyzes the coordinated movement of the two tRNA molecules, the mRNA and conformational changes in the ribosome. The sequence is that of Elongation factor G from Mycobacterium leprae (strain Br4923).